Here is a 1671-residue protein sequence, read N- to C-terminus: MILDTDYITEDGKPVIRIFKKENGEFKIEYDRTFEPYFYALLKDDSAIEEVKKITAERHGTVVTVKRVEKVQKKFLGRPVEVWKLYFTHPQDVPAIRDKIREHPAVIDIYEYDIPFAKRYLIDKGLVPMEGDEELKMLAFDIETLYHEGEEFAEGPILMISYADEEGARVITWKNVDLPYVDVVSTEREMIKRFLRVVKEKDPDVLITYNGDNFDFAYLKKRCEKLGINFALGRDGSEPKIQRMGDRFAVEVKGRIHFDLYPVIRRTINLPTYTLEAVYEAVFGQPKEKVYAEEITTAWETGENLERVARYSMEDAKVTYELGKEFLPMEAQLSRLIGQSLWDVSRSSTGNLVEWFLLRKAYERNELAPNKPDEKELARRRQSYEGGYVKEPERGLWENIVYLDFRCHPADTKVVVKGKGIINISEVQEGDYVLGIDGWQRVRKVWEYDYKGELVNINGLKCTPNHKLPVVTKNERQTRIRDSLAKSFLTKKVKGKIITTPLFYEIGRATSENIPEEEVLKGELAGILLAEGTLLRKDVEYFDSSRKKRRISHQYRVEITIGKDEEEFRDRITYIFERLFGITPSISEKKGTNAVTLKVAKKNVYLKVKEIMDNIESLHAPSVLRGFFEGDGSVNRVRRSIVATQGTKNEWKIKLVSKLLSQLGIPHQTYTYQYQENGKDRSRYILEITGKDGLILFQTLIGFISERKNALLNKAISQREMNNLENNGFYRLSEFNVSTEYYEGKVYDLTLEGTPYYFANGILTHNSLYPSIIITHNVSPDTLNREGCKEYDVAPQVGHRFCKDFPGFIPSLLGDLLEERQKIKKKMKATIDPIERKLLDYRQRAIKILANSILPEEWLPVLEEGEVHFVRIGELIDRMMEENAGKVKREGETEVLEVSGLEVPSFNRRTKKAELKRVKALIRHDYSGKVYTIRLKSGRRIKITSGHSLFSVRNGELVEVTGDELKPGDLVAVPRRLELPERNHVLNLVELLLGTPEEETLDIVMTIPVKGKKNFFKGMLRTLRWIFGEEKRPRTARRYLRHLEDLGYVRLKKIGYEVLDWDSLKNYRRLYEALVENVRYNGNKREYLVEFNSIRDAVGIMPLKELKEWKIGTLNGFRMSPLIEVDESLAKLLGYYVSEGYARKQRNPKNGWSYSVKLYNEDPEVLDDMERLASRFFGKVRRGRNYVEIPKKIGYLLFENMCGVLAENKRIPEFVFTSPKGVRLAFLEGYFIGDGDVHPNKRLRLSTKSELLANQLVLLLNSVGVSAVKLGHDSGVYRVYINEELPFVKLDKKKNAYYSHVIPKEVLSEVFGKVFQKNVSPQTFRKMVEDGRLDPEKAQRLSWLIEGDVVLDRVESVDVEDYDGYVYDLSVEDNENFLVGFGLVYAHNSYYGYYGYARARWYCKECAESVTAWGREYITMTIKEIEEKYGFKVIYSDTDGFFATIPGADAETVKKKAMEFLKYINAKLPGALELEYEGFYKRGFFVTKKKYAVIDEEGKITTRGLEIVRRDWSEIAKETQARVLEALLKDGDVEKAVRIVKEVTEKLSKYEVPPEKLVIHEQITRDLKDYKATGPHVAVAKRLAARGVKIRPGTVISYIVLKGSGRIGDRAIPFDEFDPTKHKYDAEYYIENQVLPAVERILRAFGYRKEDLRYQKTRQVGLSAWLKPKGT.

The interval 135 to 326 (LKMLAFDIET…KVTYELGKEF (192 aa)) is 3'-5' exonuclease. The region spanning 524 to 665 (LAGILLAEGT…VSKLLSQLGI (142 aa)) is the DOD-type homing endonuclease 1 domain. Cys788 and Cys802 are oxidised to a cystine. The DOD-type homing endonuclease 2 domain maps to 1132–1265 (LLGYYVSEGY…LVLLLNSVGV (134 aa)). Cys1403 and Cys1406 are joined by a disulfide.

Belongs to the DNA polymerase type-B family. Post-translationally, undergoes a protein self splicing that involves a post-translational excision of the intervening region (intein) followed by peptide ligation.

It catalyses the reaction DNA(n) + a 2'-deoxyribonucleoside 5'-triphosphate = DNA(n+1) + diphosphate. In terms of biological role, has high processivity, a high polymerization rate and high fidelity. In addition to polymerase activity, also exhibits 3' to 5' exonuclease activity. Intein encoded endonucleases are thought to mediate intein mobility by site-specific recombination initiated by endonuclease cleavage at the 'homing site' in genes that lack the intein. Upon expression in E.coli PI-PkoI recognizes the minimal sequence 5'-GATTTTAGATCCCTGTACC-3' and cuts after T-10. PI-PkoII recognizes the minimal sequence 5'-CAGCTACTACGGTTAC-3' and cuts after C-10. Given the high intracellular K(+) content (&gt;0.5 M), PI-PkoII is probably more active than PI-PkoI in vivo. In Thermococcus kodakarensis (strain ATCC BAA-918 / JCM 12380 / KOD1) (Pyrococcus kodakaraensis (strain KOD1)), this protein is DNA polymerase (pol).